A 484-amino-acid chain; its full sequence is Probable cobyric acid synthase (484 aa).

One can recognise a GATase cobBQ-type domain in the interval 247–433; that stretch reads ELHIQIVKLP…LHGIFHNFAF (187 aa). The active-site Nucleophile is the Cys325. His425 is an active-site residue.

This sequence belongs to the CobB/CobQ family. CobQ subfamily.

Its pathway is cofactor biosynthesis; adenosylcobalamin biosynthesis. Its function is as follows. Catalyzes amidations at positions B, D, E, and G on adenosylcobyrinic A,C-diamide. NH(2) groups are provided by glutamine, and one molecule of ATP is hydrogenolyzed for each amidation. The chain is Probable cobyric acid synthase from Thermococcus onnurineus (strain NA1).